A 162-amino-acid polypeptide reads, in one-letter code: Peptide deformylase (162 aa).

Fe cation contacts are provided by cysteine 91 and histidine 133. The active site involves glutamate 134. Histidine 137 is a binding site for Fe cation.

It belongs to the polypeptide deformylase family. It depends on Fe(2+) as a cofactor.

The catalysed reaction is N-terminal N-formyl-L-methionyl-[peptide] + H2O = N-terminal L-methionyl-[peptide] + formate. Functionally, removes the formyl group from the N-terminal Met of newly synthesized proteins. Requires at least a dipeptide for an efficient rate of reaction. N-terminal L-methionine is a prerequisite for activity but the enzyme has broad specificity at other positions. The protein is Peptide deformylase of Finegoldia magna (strain ATCC 29328 / DSM 20472 / WAL 2508) (Peptostreptococcus magnus).